The sequence spans 307 residues: D-alanine--D-alanine ligase (307 aa).

Positions Lys101–Glu301 constitute an ATP-grasp domain. Position 128-182 (Met128–Thr182) interacts with ATP. The Mg(2+) site is built by Asp251, Glu268, and Asn270.

Belongs to the D-alanine--D-alanine ligase family. Mg(2+) serves as cofactor. Requires Mn(2+) as cofactor.

The protein resides in the cytoplasm. The catalysed reaction is 2 D-alanine + ATP = D-alanyl-D-alanine + ADP + phosphate + H(+). Its pathway is cell wall biogenesis; peptidoglycan biosynthesis. Its function is as follows. Cell wall formation. The polypeptide is D-alanine--D-alanine ligase (Methylocella silvestris (strain DSM 15510 / CIP 108128 / LMG 27833 / NCIMB 13906 / BL2)).